A 116-amino-acid chain; its full sequence is Large ribosomal subunit protein bL19 (116 aa).

It belongs to the bacterial ribosomal protein bL19 family.

This protein is located at the 30S-50S ribosomal subunit interface and may play a role in the structure and function of the aminoacyl-tRNA binding site. The protein is Large ribosomal subunit protein bL19 of Pseudothermotoga lettingae (strain ATCC BAA-301 / DSM 14385 / NBRC 107922 / TMO) (Thermotoga lettingae).